The sequence spans 1072 residues: DNA-directed RNA polymerase subunit beta (1072 aa).

Belongs to the RNA polymerase beta chain family. In plastids the minimal PEP RNA polymerase catalytic core is composed of four subunits: alpha, beta, beta', and beta''. When a (nuclear-encoded) sigma factor is associated with the core the holoenzyme is formed, which can initiate transcription.

It is found in the plastid. Its subcellular location is the chloroplast. The catalysed reaction is RNA(n) + a ribonucleoside 5'-triphosphate = RNA(n+1) + diphosphate. Functionally, DNA-dependent RNA polymerase catalyzes the transcription of DNA into RNA using the four ribonucleoside triphosphates as substrates. In Lepidium virginicum (Virginia pepperweed), this protein is DNA-directed RNA polymerase subunit beta.